Consider the following 325-residue polypeptide: mRNA decay factor CTH1 (325 aa).

C3H1-type zinc fingers lie at residues 204-232 (LYKTELCESFTIKGYCKYGNKCQFAHGLN) and 242-270 (NYRTKPCINWSKLGYCPYGKRCCFKHGDD). Residues 284 to 306 (SKDTALTPLPTSLAPSNNDNITN) form a disordered region. Positions 292–306 (LPTSLAPSNNDNITN) are enriched in polar residues.

Functionally, binds to specific AU-rich elements (ARE) in the 3'-untranslated region of target mRNAs and promotes their degradation. In response to iron deficiency, promotes the decay of many mRNAs encoding proteins involved in iron-dependent pathways. Negatively regulates primarily iron-dependent mitochondrial processes including respiration and amino acid biosynthesis. The sequence is that of mRNA decay factor CTH1 (CTH1) from Saccharomyces cerevisiae (strain ATCC 204508 / S288c) (Baker's yeast).